A 523-amino-acid chain; its full sequence is Probable malate:quinone oxidoreductase 1 (523 aa).

This sequence belongs to the MQO family. FAD is required as a cofactor.

The catalysed reaction is (S)-malate + a quinone = a quinol + oxaloacetate. Its pathway is carbohydrate metabolism; tricarboxylic acid cycle; oxaloacetate from (S)-malate (quinone route): step 1/1. In Pseudomonas aeruginosa (strain ATCC 15692 / DSM 22644 / CIP 104116 / JCM 14847 / LMG 12228 / 1C / PRS 101 / PAO1), this protein is Probable malate:quinone oxidoreductase 1.